The chain runs to 611 residues: Dihydroxy-acid dehydratase (611 aa).

Aspartate 81 serves as a coordination point for Mg(2+). Residue cysteine 122 participates in [2Fe-2S] cluster binding. Residues aspartate 123 and lysine 124 each contribute to the Mg(2+) site. Lysine 124 carries the post-translational modification N6-carboxylysine. Cysteine 195 provides a ligand contact to [2Fe-2S] cluster. Glutamate 491 contributes to the Mg(2+) binding site. Serine 517 (proton acceptor) is an active-site residue.

It belongs to the IlvD/Edd family. In terms of assembly, homodimer. [2Fe-2S] cluster serves as cofactor. It depends on Mg(2+) as a cofactor.

It carries out the reaction (2R)-2,3-dihydroxy-3-methylbutanoate = 3-methyl-2-oxobutanoate + H2O. It catalyses the reaction (2R,3R)-2,3-dihydroxy-3-methylpentanoate = (S)-3-methyl-2-oxopentanoate + H2O. Its pathway is amino-acid biosynthesis; L-isoleucine biosynthesis; L-isoleucine from 2-oxobutanoate: step 3/4. The protein operates within amino-acid biosynthesis; L-valine biosynthesis; L-valine from pyruvate: step 3/4. Functions in the biosynthesis of branched-chain amino acids. Catalyzes the dehydration of (2R,3R)-2,3-dihydroxy-3-methylpentanoate (2,3-dihydroxy-3-methylvalerate) into 2-oxo-3-methylpentanoate (2-oxo-3-methylvalerate) and of (2R)-2,3-dihydroxy-3-methylbutanoate (2,3-dihydroxyisovalerate) into 2-oxo-3-methylbutanoate (2-oxoisovalerate), the penultimate precursor to L-isoleucine and L-valine, respectively. In Histophilus somni (strain 129Pt) (Haemophilus somnus), this protein is Dihydroxy-acid dehydratase.